We begin with the raw amino-acid sequence, 448 residues long: MSQSTATYINVIGAGLAGSEAAYQIAKRGIPVKLYEMRGVKATPQHKTTNFAELVCSNSFRGDSLTNAVGLLKEEMRRLDSIIMRNGEANRVPAGGAMAVDREGYAKSVTAELENHPLIEVIRDEITEIPNDAITVIATGPLTSDALAEKIHAVNGGDGFYFYDAAAPIIDKSTIDMSKVYLKSRYDKGEAAYLNCPMTKEEFMAFHEALTTAEEAPLNSFEKEKYFEGCMPIEVMAKRGIKTMLYGPMKPVGLEYPDDYTGPRDGEFKTPYAVVQLRQDNAAGSLYNIVGFQTHLKWGEQKRVFQMIPGLENAEFVRYGVMHRNSYMDSPNLLTETFQSRSNPNLLFAGQMTGVEGYVESAASGLVAGINAARLFKREEALIFPQTTAIGSLPHYVTHADSKHFQPMNVNFGIIKELEGPRIRDKKERYEAIASRALADLDTCLASL.

13–18 (GAGLAG) contacts FAD.

The protein belongs to the MnmG family. TrmFO subfamily. It depends on FAD as a cofactor.

It localises to the cytoplasm. It carries out the reaction uridine(54) in tRNA + (6R)-5,10-methylene-5,6,7,8-tetrahydrofolate + NADH + H(+) = 5-methyluridine(54) in tRNA + (6S)-5,6,7,8-tetrahydrofolate + NAD(+). The enzyme catalyses uridine(54) in tRNA + (6R)-5,10-methylene-5,6,7,8-tetrahydrofolate + NADPH + H(+) = 5-methyluridine(54) in tRNA + (6S)-5,6,7,8-tetrahydrofolate + NADP(+). Catalyzes the folate-dependent formation of 5-methyl-uridine at position 54 (M-5-U54) in all tRNAs. In Streptococcus pyogenes serotype M3 (strain ATCC BAA-595 / MGAS315), this protein is Methylenetetrahydrofolate--tRNA-(uracil-5-)-methyltransferase TrmFO.